The following is a 165-amino-acid chain: Crossover junction endodeoxyribonuclease RuvC (165 aa).

Residues aspartate 7, glutamate 66, and aspartate 138 contribute to the active site. Residues aspartate 7, glutamate 66, and aspartate 138 each coordinate Mg(2+).

It belongs to the RuvC family. As to quaternary structure, homodimer which binds Holliday junction (HJ) DNA. The HJ becomes 2-fold symmetrical on binding to RuvC with unstacked arms; it has a different conformation from HJ DNA in complex with RuvA. In the full resolvosome a probable DNA-RuvA(4)-RuvB(12)-RuvC(2) complex forms which resolves the HJ. The cofactor is Mg(2+).

The protein resides in the cytoplasm. It catalyses the reaction Endonucleolytic cleavage at a junction such as a reciprocal single-stranded crossover between two homologous DNA duplexes (Holliday junction).. The RuvA-RuvB-RuvC complex processes Holliday junction (HJ) DNA during genetic recombination and DNA repair. Endonuclease that resolves HJ intermediates. Cleaves cruciform DNA by making single-stranded nicks across the HJ at symmetrical positions within the homologous arms, yielding a 5'-phosphate and a 3'-hydroxyl group; requires a central core of homology in the junction. The consensus cleavage sequence is 5'-(A/T)TT(C/G)-3'. Cleavage occurs on the 3'-side of the TT dinucleotide at the point of strand exchange. HJ branch migration catalyzed by RuvA-RuvB allows RuvC to scan DNA until it finds its consensus sequence, where it cleaves and resolves the cruciform DNA. This Ruegeria pomeroyi (strain ATCC 700808 / DSM 15171 / DSS-3) (Silicibacter pomeroyi) protein is Crossover junction endodeoxyribonuclease RuvC.